Here is a 370-residue protein sequence, read N- to C-terminus: MAPKLQAQFDAVKVLNDTQSKFEMVQILDENGNVVNEDLVPDLTDEQLVELMERMVWTRILDQRSISLNRQGRLGFYAPTAGQEASQLASQYALEKEDYILPGYRDVPQIIWHGLPLTEAFLFSRGHFKGNQFPEGVNALSPQIIIGAQYIQTAGVAFALKKRGKNAVAITYTGDGGSSQGDFYEGINFAAAYKAPAIFVIQNNNYAISTPRSKQTAAETLAQKAIAVGIPGIQVDGMDALAVYQATKEARDRAVAGEGPTLIETMTYRYGPHTMAGDDPTRYRTSDEDAEWEKKDPLVRFRKFLENKGLWNEDKENEVIERAKADIKAAIKEADNTEKQTVTSLMEIMYEDMPQNLAEQYEIYKEKESK.

Heterodimer of an alpha and a beta chain. Requires thiamine diphosphate as cofactor.

The enzyme catalyses N(6)-[(R)-lipoyl]-L-lysyl-[protein] + pyruvate + H(+) = N(6)-[(R)-S(8)-acetyldihydrolipoyl]-L-lysyl-[protein] + CO2. In terms of biological role, the pyruvate dehydrogenase complex catalyzes the overall conversion of pyruvate to acetyl-CoA and CO(2). It contains multiple copies of three enzymatic components: pyruvate dehydrogenase (E1), dihydrolipoamide acetyltransferase (E2) and lipoamide dehydrogenase (E3). The protein is Pyruvate dehydrogenase E1 component subunit alpha (pdhA) of Staphylococcus aureus (strain MRSA252).